We begin with the raw amino-acid sequence, 639 residues long: Chaperone protein DnaK (639 aa).

At Thr-198 the chain carries Phosphothreonine; by autocatalysis. Residues 597–639 (AYSAGQSAEGAPHAAGAEASAQSRTDDGVVDADFEEVDEKKGH) are disordered. Low complexity predominate over residues 603–617 (SAEGAPHAAGAEASA). Acidic residues predominate over residues 624 to 633 (GVVDADFEEV).

It belongs to the heat shock protein 70 family.

Its function is as follows. Acts as a chaperone. The polypeptide is Chaperone protein DnaK (Rhodospirillum rubrum (strain ATCC 11170 / ATH 1.1.1 / DSM 467 / LMG 4362 / NCIMB 8255 / S1)).